We begin with the raw amino-acid sequence, 271 residues long: MGFMTQKEMAPLPDVHQLSDEQTTLTVEHLNLYYGNKQALNDISIRIPKNQVTALIGPSGCGKSTLLRCFNRMNDLVDDCRTEGDIRLNGMPINDPQLDVAVLRRRIGMVFQRPNPFPKSIYENVIYGLRLQGLRDRRLLDDAVERALRAAALWHEVKDRLSDNALTLSSGQQQRLVIARAIAIEPEVLLLDEPTSALDPISTLIVEELMGTLKQHFTLVLVTHNMQQAARVSDYTAFINQGKLIEYNRTDDLFTSPTQRRTEDYITGRFG.

In terms of domain architecture, ABC transporter spans 25–266 (LTVEHLNLYY…PTQRRTEDYI (242 aa)). Residue 57-64 (GPSGCGKS) participates in ATP binding.

The protein belongs to the ABC transporter superfamily. Phosphate importer (TC 3.A.1.7) family. The complex is composed of two ATP-binding proteins (PstB), two transmembrane proteins (PstC and PstA) and a solute-binding protein (PstS).

The protein resides in the cell inner membrane. It carries out the reaction phosphate(out) + ATP + H2O = ADP + 2 phosphate(in) + H(+). Its function is as follows. Part of the ABC transporter complex PstSACB involved in phosphate import. Responsible for energy coupling to the transport system. The polypeptide is Phosphate import ATP-binding protein PstB 1 (Pectobacterium atrosepticum (strain SCRI 1043 / ATCC BAA-672) (Erwinia carotovora subsp. atroseptica)).